The chain runs to 288 residues: Phosphatidylserine decarboxylase proenzyme (288 aa).

Active-site charge relay system; for autoendoproteolytic cleavage activity residues include aspartate 91, histidine 148, and serine 254. Serine 254 functions as the Schiff-base intermediate with substrate; via pyruvic acid; for decarboxylase activity in the catalytic mechanism. Pyruvic acid (Ser); by autocatalysis is present on serine 254.

The protein belongs to the phosphatidylserine decarboxylase family. PSD-B subfamily. Prokaryotic type I sub-subfamily. In terms of assembly, heterodimer of a large membrane-associated beta subunit and a small pyruvoyl-containing alpha subunit. It depends on pyruvate as a cofactor. In terms of processing, is synthesized initially as an inactive proenzyme. Formation of the active enzyme involves a self-maturation process in which the active site pyruvoyl group is generated from an internal serine residue via an autocatalytic post-translational modification. Two non-identical subunits are generated from the proenzyme in this reaction, and the pyruvate is formed at the N-terminus of the alpha chain, which is derived from the carboxyl end of the proenzyme. The autoendoproteolytic cleavage occurs by a canonical serine protease mechanism, in which the side chain hydroxyl group of the serine supplies its oxygen atom to form the C-terminus of the beta chain, while the remainder of the serine residue undergoes an oxidative deamination to produce ammonia and the pyruvoyl prosthetic group on the alpha chain. During this reaction, the Ser that is part of the protease active site of the proenzyme becomes the pyruvoyl prosthetic group, which constitutes an essential element of the active site of the mature decarboxylase.

The protein localises to the cell membrane. The catalysed reaction is a 1,2-diacyl-sn-glycero-3-phospho-L-serine + H(+) = a 1,2-diacyl-sn-glycero-3-phosphoethanolamine + CO2. The protein operates within phospholipid metabolism; phosphatidylethanolamine biosynthesis; phosphatidylethanolamine from CDP-diacylglycerol: step 2/2. Functionally, catalyzes the formation of phosphatidylethanolamine (PtdEtn) from phosphatidylserine (PtdSer). In Pseudoalteromonas translucida (strain TAC 125), this protein is Phosphatidylserine decarboxylase proenzyme.